Consider the following 367-residue polypeptide: Germination protease (367 aa).

A propeptide spanning residues 1–15 is cleaved from the precursor; that stretch reads MKEPLDLSKYSIRTD.

Belongs to the peptidase A25 family. Homotetramer. Autoproteolytically processed. The inactive tetrameric zymogen termed p46 autoprocesses to a smaller form termed p41, which is active only during spore germination.

The catalysed reaction is Endopeptidase action with P4 Glu or Asp, P1 preferably Glu &gt; Asp, P1' hydrophobic and P2' Ala.. Its function is as follows. Initiates the rapid degradation of small, acid-soluble proteins during spore germination. This Bacillus cereus (strain ATCC 14579 / DSM 31 / CCUG 7414 / JCM 2152 / NBRC 15305 / NCIMB 9373 / NCTC 2599 / NRRL B-3711) protein is Germination protease.